A 720-amino-acid chain; its full sequence is NADH-ubiquinone oxidoreductase 78 kDa subunit, mitochondrial (720 aa).

The transit peptide at 1 to 23 directs the protein to the mitochondrion; that stretch reads MNSIKSHILRSSKRYISASSKRL. The 2Fe-2S ferredoxin-type domain maps to 24–102; sequence AEVEVTVDGR…GMVVHTDSER (79 aa). Positions 58, 69, 72, and 86 each coordinate [2Fe-2S] cluster. The 40-residue stretch at 102-141 folds into the 4Fe-4S His(Cys)3-ligated-type domain; the sequence is RIKKAREGVTEMLLENHPLDCPVCDQGGECDLQEQSQRYG. In terms of domain architecture, 4Fe-4S Mo/W bis-MGD-type spans 241 to 297; the sequence is LKRTETIDVLDAVGSNIRVDTRGIEVMRVLPRLNDDVNEEWISDKTRFACDGLKTQR.

This sequence belongs to the complex I 75 kDa subunit family. Core subunit of respiratory chain NADH dehydrogenase (Complex I) which is composed of 45 different subunits. This is the largest subunit of complex I and it is a component of the iron-sulfur (IP) fragment of the enzyme. It depends on [2Fe-2S] cluster as a cofactor. Requires [4Fe-4S] cluster as cofactor.

The protein resides in the mitochondrion. It carries out the reaction a ubiquinone + NADH + 5 H(+)(in) = a ubiquinol + NAD(+) + 4 H(+)(out). Functionally, core subunit of the mitochondrial membrane respiratory chain NADH dehydrogenase (Complex I) which catalyzes electron transfer from NADH through the respiratory chain, using ubiquinone as an electron acceptor. Essential for catalysing the entry and efficient transfer of electrons within complex I. Plays a key role in the assembly and stability of complex I and participates in the association of complex I with ubiquinol-cytochrome reductase complex (Complex III) to form supercomplexes. Plays a role in cell wall integrity and is involved in osmotic and oxidative resistance, yeast to hypha transition, and the ability to damage and invade oral epithelial cells. The sequence is that of NADH-ubiquinone oxidoreductase 78 kDa subunit, mitochondrial from Candida albicans (strain SC5314 / ATCC MYA-2876) (Yeast).